Here is a 104-residue protein sequence, read N- to C-terminus: Putative ankyrin repeat protein L677 (104 aa).

ANK repeat units follow at residues 16–43 (FNKS…NPNL), 44–73 (DISH…SNSV), and 75–102 (LEAY…NKSI).

This is Putative ankyrin repeat protein L677 from Acanthamoeba polyphaga (Amoeba).